Consider the following 209-residue polypeptide: Translation initiation factor IF-3 (209 aa).

Belongs to the IF-3 family. In terms of assembly, monomer.

It localises to the cytoplasm. Its function is as follows. IF-3 binds to the 30S ribosomal subunit and shifts the equilibrium between 70S ribosomes and their 50S and 30S subunits in favor of the free subunits, thus enhancing the availability of 30S subunits on which protein synthesis initiation begins. This Chlorobium phaeovibrioides (strain DSM 265 / 1930) (Prosthecochloris vibrioformis (strain DSM 265)) protein is Translation initiation factor IF-3.